Consider the following 352-residue polypeptide: Uroporphyrinogen decarboxylase (352 aa).

Residues 26–30 (RQAGR), Asp76, Tyr153, Ser208, and His323 each bind substrate.

It belongs to the uroporphyrinogen decarboxylase family. Homodimer.

Its subcellular location is the cytoplasm. The enzyme catalyses uroporphyrinogen III + 4 H(+) = coproporphyrinogen III + 4 CO2. It participates in porphyrin-containing compound metabolism; protoporphyrin-IX biosynthesis; coproporphyrinogen-III from 5-aminolevulinate: step 4/4. Catalyzes the decarboxylation of four acetate groups of uroporphyrinogen-III to yield coproporphyrinogen-III. This Synechococcus sp. (strain CC9605) protein is Uroporphyrinogen decarboxylase.